A 304-amino-acid polypeptide reads, in one-letter code: Acetyl-coenzyme A carboxylase carboxyl transferase subunit beta (304 aa).

Residues 16–42 (SSLPPKNSEGGLAYFDEPSPEQESTRK) are disordered. Residues 48–304 (LWVKCPKCGE…LLRYHQEGAV (257 aa)) enclose the CoA carboxyltransferase N-terminal domain. Positions 52, 55, 71, and 74 each coordinate Zn(2+). The segment at 52-74 (CPKCGEALFNKDLVENQRVCLTC) adopts a C4-type zinc-finger fold.

It belongs to the AccD/PCCB family. Acetyl-CoA carboxylase is a heterohexamer composed of biotin carboxyl carrier protein (AccB), biotin carboxylase (AccC) and two subunits each of ACCase subunit alpha (AccA) and ACCase subunit beta (AccD). Zn(2+) serves as cofactor.

It localises to the cytoplasm. The catalysed reaction is N(6)-carboxybiotinyl-L-lysyl-[protein] + acetyl-CoA = N(6)-biotinyl-L-lysyl-[protein] + malonyl-CoA. Its pathway is lipid metabolism; malonyl-CoA biosynthesis; malonyl-CoA from acetyl-CoA: step 1/1. In terms of biological role, component of the acetyl coenzyme A carboxylase (ACC) complex. Biotin carboxylase (BC) catalyzes the carboxylation of biotin on its carrier protein (BCCP) and then the CO(2) group is transferred by the transcarboxylase to acetyl-CoA to form malonyl-CoA. This Desulfitobacterium hafniense (strain Y51) protein is Acetyl-coenzyme A carboxylase carboxyl transferase subunit beta.